The sequence spans 323 residues: Prostaglandin F synthase 2 (323 aa).

NADP(+) is bound by residues 20 to 24 and aspartate 50; that span reads GFGTY. Tyrosine 55 (proton donor) is an active-site residue. Residue histidine 117 participates in substrate binding. NADP(+) is bound by residues 166 to 167, glutamine 190, 216 to 221, and 270 to 280; these read SN, YAALGA, and KSFNKKRIKEN.

The protein belongs to the aldo/keto reductase family. Monomer.

The protein resides in the cytoplasm. The catalysed reaction is prostaglandin F2alpha + NADP(+) = prostaglandin D2 + NADPH + H(+). It functions in the pathway lipid metabolism; prostaglandin biosynthesis. Functionally, catalyzes the reduction of PGD(2) and PGH(2) to PGF(2 alpha) and a stereoisomer, respectively. It has a broad substrate specificity and also reduces other carbonyl compounds. This is Prostaglandin F synthase 2 from Bos taurus (Bovine).